Reading from the N-terminus, the 372-residue chain is Protein phosphatase 1 regulatory subunit 42 (372 aa).

7 LRR repeats span residues 30–51 (RITH…TMCR), 52–71 (NLTV…NLGS), 72–93 (NLTH…SGLK), 94–115 (RLEK…EGLR), 116–137 (ELRE…LFDP), 146–167 (SLSV…AVLE), and 168–189 (NLTQ…EFVL). The region spanning 203–241 (NPVCLKPKYREKVTIISKTLEILDGKEIKEMARQFLLNW) is the LRRCT domain.

The protein localises to the cytoplasm. It localises to the cytoskeleton. The protein resides in the microtubule organizing center. It is found in the centrosome. Functionally, may regulate phosphatase activity of protein phosphatase 1 (PP1) complexes. The sequence is that of Protein phosphatase 1 regulatory subunit 42 (ppp1r42) from Xenopus laevis (African clawed frog).